The chain runs to 235 residues: Tissue factor pathway inhibitor 2 (235 aa).

The signal sequence occupies residues 1 to 22 (MDPARPLGLSILLLFLTEAALG). 3 BPTI/Kunitz inhibitor domains span residues 36–86 (CLLP…DDAC), 96–149 (CRLQ…MGFC), and 158–208 (CYSP…KRAC). 9 cysteine pairs are disulfide-bonded: C36-C86, C45-C69, C61-C82, C96-C149, C106-C130, C122-C145, C158-C208, C167-C191, and C183-C204. N116 carries an N-linked (GlcNAc...) asparagine glycan. N170 is a glycosylation site (N-linked (GlcNAc...) asparagine).

As to quaternary structure, finds in a complex with ABCB1, TFPI2 and PPP2R3C; leading to the dephosphorylation of ABCB1. As to expression, umbilical vein endothelial cells, liver, placenta, heart, pancreas, and maternal serum at advanced pregnancy.

The protein resides in the secreted. In terms of biological role, may play a role in the regulation of plasmin-mediated matrix remodeling. Inhibits trypsin, plasmin, factor VIIa/tissue factor and weakly factor Xa. Has no effect on thrombin. The polypeptide is Tissue factor pathway inhibitor 2 (TFPI2) (Homo sapiens (Human)).